The primary structure comprises 527 residues: Amine oxidase [flavin-containing] A (527 aa).

Methionine 1 is subject to N-acetylmethionine. Residues 1 to 497 lie on the Cytoplasmic side of the membrane; the sequence is MASQEKASMA…HSFWERNLPS (497 aa). The residue at position 383 (serine 383) is a Phosphoserine. Cysteine 406 carries the S-8alpha-FAD cysteine modification. The helical; Anchor for type IV membrane protein transmembrane segment at 498–518 threads the bilayer; it reads VGGLLKIIGFSTSITALWIVV. Residues 519-527 lie on the Mitochondrial intermembrane side of the membrane; it reads YKFKLLTRS. The segment at 520 to 522 is interaction with membrane phospholipid headgroups; that stretch reads KFK.

The protein belongs to the flavin monoamine oxidase family. In terms of assembly, monomer, homo- or heterodimer (containing two subunits of similar size). Each subunit contains a covalently bound flavin. Enzymatically active as monomer. FAD serves as cofactor.

It localises to the mitochondrion outer membrane. It carries out the reaction a secondary aliphatic amine + O2 + H2O = a primary amine + an aldehyde + H2O2. The enzyme catalyses a primary methyl amine + O2 + H2O = an aldehyde + H2O2 + NH4(+). The catalysed reaction is (R)-adrenaline + O2 + H2O = (R)-3,4-dihydroxymandelaldehyde + methylamine + H2O2. It catalyses the reaction dopamine + O2 + H2O = 3,4-dihydroxyphenylacetaldehyde + H2O2 + NH4(+). It carries out the reaction tyramine + O2 + H2O = (4-hydroxyphenyl)acetaldehyde + H2O2 + NH4(+). The enzyme catalyses (R)-noradrenaline + O2 + H2O = (R)-3,4-dihydroxymandelaldehyde + H2O2 + NH4(+). The catalysed reaction is serotonin + O2 + H2O = (5-hydroxyindol-3-yl)acetaldehyde + H2O2 + NH4(+). It catalyses the reaction kynuramine + O2 + H2O = 3-(2-aminophenyl)-3-oxopropanal + H2O2 + NH4(+). It carries out the reaction tryptamine + O2 + H2O = indole-3-acetaldehyde + H2O2 + NH4(+). The enzyme catalyses 2-phenylethylamine + O2 + H2O = 2-phenylacetaldehyde + H2O2 + NH4(+). Catalyzes the oxidative deamination of primary and some secondary amine such as neurotransmitters, with concomitant reduction of oxygen to hydrogen peroxide and has important functions in the metabolism of neuroactive and vasoactive amines in the central nervous system and peripheral tissues. Preferentially oxidizes serotonin. Also catalyzes the oxidative deamination of kynuramine to 3-(2-aminophenyl)-3-oxopropanal that can spontaneously condense to 4-hydroxyquinoline. The sequence is that of Amine oxidase [flavin-containing] A from Equus caballus (Horse).